The primary structure comprises 938 residues: Glutamate receptor ionotropic, NMDA 1 (938 aa).

Positions 1 to 18 (MSTMHLLTFALLFSCSFA) are cleaved as a signal peptide. Over 19-559 (RAACDPKIVN…TLDSFMQPFQ (541 aa)) the chain is Extracellular. Asn61, Asn203, Asn239, Asn276, Asn300, Asn350, Asn368, Asn440, Asn471, and Asn491 each carry an N-linked (GlcNAc...) asparagine glycan. An intrachain disulfide couples Cys79 to Cys308. Intrachain disulfides connect Cys420/Cys454 and Cys436/Cys455. Pro516, Thr518, and Arg523 together coordinate glycine. Residues 560–580 (STLWLLVGLSVHVVAVMLYLL) form a helical membrane-spanning segment. Residues 581 to 602 (DRFSPFGRFKVNSEEEEEDALT) are Cytoplasmic-facing. The discontinuously helical intramembrane region spans 603 to 624 (LSSAMWFSWGVLLNSGIGEGAP). Residues 603-624 (LSSAMWFSWGVLLNSGIGEGAP) are pore-forming. The Cytoplasmic segment spans residues 625 to 630 (RSFSAR). A helical membrane pass occupies residues 631–647 (ILGMVWAGFAMIIVASY). Over 648 to 812 (TANLAAFLVL…NAPATLTFEN (165 aa)) the chain is Extracellular. Asn674 carries an N-linked (GlcNAc...) asparagine glycan. Residues Ser688 and Asp732 each coordinate glycine. Cys744 and Cys798 form a disulfide bridge. Asn771 carries an N-linked (GlcNAc...) asparagine glycan. The chain crosses the membrane as a helical span at residues 813–833 (MAGVFMLVAGGIVAGIFLIFI). The Cytoplasmic portion of the chain corresponds to 834–938 (EIAYKRHKDA…LQLCSRHRES (105 aa)). At Lys877 the chain carries Phosphoserine. Phosphoserine; by PKC occurs at positions 889, 890, 896, and 897. Residues 889 to 938 (SSFKRRRSSKDTSTGGGRGALQNQKDTVLPRRAIEREEGQLQLCSRHRES) are disordered. Residue Lys898 is modified to Phosphoserine. Residues 916-927 (VLPRRAIEREEG) show a composition bias toward basic and acidic residues.

The protein belongs to the glutamate-gated ion channel (TC 1.A.10.1) family. NR1/GRIN1 subfamily. In terms of assembly, heterotetramer; the NMDAR subunits are modular and harbor tiered domains that function in concert to regulate opening and closing of the cation-selective ion channel pore. Forms heterotetrameric channels composed of two GluN1/zeta subunits (GRIN1), and two identical GluN2/epsilon subunits (GRIN2A, GRIN2B, GRIN2C or GRIN2D) or GluN3 subunits (GRIN3A or GRIN3B) (in vitro). Can also form heterotetrameric channels that contain at least two GluN1 subunits and at least two different GluN2 subunits (or a combination of one GluN2 and one GluN3 subunits) (in vitro). In vivo, the subunit composition may vary in function of the expression levels of the different subunits. Found in a complex with GRIN2A or GRIN2B, GRIN3A and PPP2CB. Found in a complex with GRIN2A or GRIN2B and GRIN3B;. Interacts with SNX27 (via PDZ domain); the interaction is required for recycling to the plasma membrane when endocytosed and prevent degradation in lysosomes. Interacts with DLG4 and MPDZ. Interacts with LRFN1 and LRFN2. Interacts with MYZAP. Found in a complex with DLG4 and PRR7. Found in a complex with GRIN2B and PRR7. Interacts with PRR7; the interaction is reduced following NMDA receptor activity. Post-translationally, NMDA is probably regulated by C-terminal phosphorylation of an isoform of NR1 by PKC. Dephosphorylated on Ser-897 probably by protein phosphatase 2A (PPP2CB). Its phosphorylated state is influenced by the formation of the NMDAR-PPP2CB complex and the NMDAR channel activity. In terms of tissue distribution, detected throughout the brain, in brain cortex, cerebellum, thalamus and olfactory bulb.

It localises to the cell membrane. The protein localises to the postsynaptic cell membrane. Its subcellular location is the synaptic cell membrane. The protein resides in the postsynaptic density membrane. The catalysed reaction is Ca(2+)(in) = Ca(2+)(out). It catalyses the reaction Na(+)(in) = Na(+)(out). The enzyme catalyses K(+)(in) = K(+)(out). Its activity is regulated as follows. NMDA glutamate receptor activity is potentiated by Zn2(+) in a dose-dependent fashion. The potentiating effect of Zn2(+) is at submicromolar concentrations and its inhibitory action is at high micromolar to millimolar concentrations. Excitatory glycine receptors are inhibited by D-serine at 100uM. In terms of biological role, component of N-methyl-D-aspartate (NMDA) receptors (NMDARs) that function as heterotetrameric, ligand-gated cation channels with high calcium permeability and voltage-dependent block by Mg(2+). NMDARs participate in synaptic plasticity for learning and memory formation by contributing to the long-term potentiation (LTP). Channel activation requires binding of the neurotransmitter L-glutamate to the GluN2 subunit, glycine or D-serine binding to the GluN1 subunit, plus membrane depolarization to eliminate channel inhibition by Mg(2+). NMDARs mediate simultaneously the potasium efflux and the influx of calcium and sodium. Each GluN2 or GluN3 subunit confers differential attributes to channel properties, including activation, deactivation and desensitization kinetics, pH sensitivity, Ca2(+) permeability, and binding to allosteric modulators. Forms excitatory glycinergic receptor complexes with GluN3 alone which are activated by glycine binding to the GluN1 and GluN3 subunits. In Rattus norvegicus (Rat), this protein is Glutamate receptor ionotropic, NMDA 1.